We begin with the raw amino-acid sequence, 285 residues long: Acetyl-coenzyme A carboxylase carboxyl transferase subunit beta (285 aa).

One can recognise a CoA carboxyltransferase N-terminal domain in the interval 29–285 (IMTKCPKCKK…ILKIHQEVTK (257 aa)). Zn(2+)-binding residues include C33, C36, C52, and C55. The C4-type zinc finger occupies 33 to 55 (CPKCKKIMYTKELAENLNVCFNC).

Belongs to the AccD/PCCB family. As to quaternary structure, acetyl-CoA carboxylase is a heterohexamer composed of biotin carboxyl carrier protein (AccB), biotin carboxylase (AccC) and two subunits each of ACCase subunit alpha (AccA) and ACCase subunit beta (AccD). It depends on Zn(2+) as a cofactor.

The protein resides in the cytoplasm. The catalysed reaction is N(6)-carboxybiotinyl-L-lysyl-[protein] + acetyl-CoA = N(6)-biotinyl-L-lysyl-[protein] + malonyl-CoA. The protein operates within lipid metabolism; malonyl-CoA biosynthesis; malonyl-CoA from acetyl-CoA: step 1/1. Functionally, component of the acetyl coenzyme A carboxylase (ACC) complex. Biotin carboxylase (BC) catalyzes the carboxylation of biotin on its carrier protein (BCCP) and then the CO(2) group is transferred by the transcarboxylase to acetyl-CoA to form malonyl-CoA. The chain is Acetyl-coenzyme A carboxylase carboxyl transferase subunit beta from Staphylococcus aureus (strain Newman).